The primary structure comprises 286 residues: Pyridoxal kinase PdxY (286 aa).

Substrate-binding positions include S9 and 44–45 (TQ). ATP is bound by residues D111, A143, E148, K181, and 208 to 211 (RPLV). D223 is a substrate binding site.

The protein belongs to the pyridoxine kinase family. PdxY subfamily. In terms of assembly, homodimer. Mg(2+) serves as cofactor.

It catalyses the reaction pyridoxal + ATP = pyridoxal 5'-phosphate + ADP + H(+). It functions in the pathway cofactor metabolism; pyridoxal 5'-phosphate salvage; pyridoxal 5'-phosphate from pyridoxal: step 1/1. Functionally, pyridoxal kinase involved in the salvage pathway of pyridoxal 5'-phosphate (PLP). Catalyzes the phosphorylation of pyridoxal to PLP. This chain is Pyridoxal kinase PdxY, found in Salmonella paratyphi A (strain ATCC 9150 / SARB42).